Consider the following 83-residue polypeptide: Cytochrome b559 subunit alpha (83 aa).

A helical transmembrane segment spans residues 21–35; it reads VIHSITIPSLFIAGW. A heme-binding site is contributed by histidine 23.

Belongs to the PsbE/PsbF family. As to quaternary structure, heterodimer of an alpha subunit and a beta subunit. PSII is composed of 1 copy each of membrane proteins PsbA, PsbB, PsbC, PsbD, PsbE, PsbF, PsbH, PsbI, PsbJ, PsbK, PsbL, PsbM, PsbT, PsbX, PsbY, PsbZ, Psb30/Ycf12, at least 3 peripheral proteins of the oxygen-evolving complex and a large number of cofactors. It forms dimeric complexes. Requires heme b as cofactor.

The protein localises to the plastid. It localises to the chloroplast thylakoid membrane. This b-type cytochrome is tightly associated with the reaction center of photosystem II (PSII). PSII is a light-driven water:plastoquinone oxidoreductase that uses light energy to abstract electrons from H(2)O, generating O(2) and a proton gradient subsequently used for ATP formation. It consists of a core antenna complex that captures photons, and an electron transfer chain that converts photonic excitation into a charge separation. This chain is Cytochrome b559 subunit alpha, found in Amborella trichopoda.